A 152-amino-acid chain; its full sequence is SsrA-binding protein (152 aa).

The tract at residues 130 to 152 (HDKRQDLKQRQDKREMERAMKQR) is disordered. Residues 132-152 (KRQDLKQRQDKREMERAMKQR) show a composition bias toward basic and acidic residues.

This sequence belongs to the SmpB family.

Its subcellular location is the cytoplasm. Its function is as follows. Required for rescue of stalled ribosomes mediated by trans-translation. Binds to transfer-messenger RNA (tmRNA), required for stable association of tmRNA with ribosomes. tmRNA and SmpB together mimic tRNA shape, replacing the anticodon stem-loop with SmpB. tmRNA is encoded by the ssrA gene; the 2 termini fold to resemble tRNA(Ala) and it encodes a 'tag peptide', a short internal open reading frame. During trans-translation Ala-aminoacylated tmRNA acts like a tRNA, entering the A-site of stalled ribosomes, displacing the stalled mRNA. The ribosome then switches to translate the ORF on the tmRNA; the nascent peptide is terminated with the 'tag peptide' encoded by the tmRNA and targeted for degradation. The ribosome is freed to recommence translation, which seems to be the essential function of trans-translation. The protein is SsrA-binding protein of Thermosynechococcus vestitus (strain NIES-2133 / IAM M-273 / BP-1).